We begin with the raw amino-acid sequence, 1036 residues long: uncharacterized protein (1036 aa).

2 helical membrane passes run 4–24 (YLFI…NASL) and 1004–1024 (ILWV…VLFL).

It belongs to the MG414/MG415 family.

The protein localises to the cell membrane. This is an uncharacterized protein from Mycoplasma genitalium (strain ATCC 33530 / DSM 19775 / NCTC 10195 / G37) (Mycoplasmoides genitalium).